The chain runs to 624 residues: tRNA uridine 5-carboxymethylaminomethyl modification enzyme MnmG (624 aa).

Residues 13 to 18 (GGGHAG), V125, and S180 each bind FAD. 273–287 (GPRYCPSIEDKIVRF) lines the NAD(+) pocket. Q370 lines the FAD pocket.

The protein belongs to the MnmG family. Homodimer. Heterotetramer of two MnmE and two MnmG subunits. Requires FAD as cofactor.

The protein resides in the cytoplasm. Its function is as follows. NAD-binding protein involved in the addition of a carboxymethylaminomethyl (cmnm) group at the wobble position (U34) of certain tRNAs, forming tRNA-cmnm(5)s(2)U34. In Legionella pneumophila (strain Corby), this protein is tRNA uridine 5-carboxymethylaminomethyl modification enzyme MnmG.